Reading from the N-terminus, the 341-residue chain is Biotin synthase (341 aa).

The 224-residue stretch at serine 43–lysine 266 folds into the Radical SAM core domain. [4Fe-4S] cluster-binding residues include cysteine 58, cysteine 62, and cysteine 65. The [2Fe-2S] cluster site is built by cysteine 102, cysteine 133, cysteine 193, and arginine 270.

It belongs to the radical SAM superfamily. Biotin synthase family. Homodimer. The cofactor is [4Fe-4S] cluster. Requires [2Fe-2S] cluster as cofactor.

It catalyses the reaction (4R,5S)-dethiobiotin + (sulfur carrier)-SH + 2 reduced [2Fe-2S]-[ferredoxin] + 2 S-adenosyl-L-methionine = (sulfur carrier)-H + biotin + 2 5'-deoxyadenosine + 2 L-methionine + 2 oxidized [2Fe-2S]-[ferredoxin]. It functions in the pathway cofactor biosynthesis; biotin biosynthesis; biotin from 7,8-diaminononanoate: step 2/2. Its function is as follows. Catalyzes the conversion of dethiobiotin (DTB) to biotin by the insertion of a sulfur atom into dethiobiotin via a radical-based mechanism. In Caulobacter vibrioides (strain ATCC 19089 / CIP 103742 / CB 15) (Caulobacter crescentus), this protein is Biotin synthase.